A 211-amino-acid polypeptide reads, in one-letter code: Holliday junction branch migration complex subunit RuvA (211 aa).

Residues 1-63 form a domain I region; sequence MIASLRGTVI…EDSQTLYVFK (63 aa). The segment at 64–142 is domain II; it reads DADEKRAFAT…DLGEIADTGA (79 aa). The segment at 143 to 157 is flexible linker; sequence VGAAGAVGDGGDGQA. Residues 158 to 211 are domain III; sequence VAPDVREQVLEALVGLGFTESKAGTTIEAVLSQWSAPQAPDASGLLRASLAAIK.

The protein belongs to the RuvA family. As to quaternary structure, homotetramer. Forms an RuvA(8)-RuvB(12)-Holliday junction (HJ) complex. HJ DNA is sandwiched between 2 RuvA tetramers; dsDNA enters through RuvA and exits via RuvB. An RuvB hexamer assembles on each DNA strand where it exits the tetramer. Each RuvB hexamer is contacted by two RuvA subunits (via domain III) on 2 adjacent RuvB subunits; this complex drives branch migration. In the full resolvosome a probable DNA-RuvA(4)-RuvB(12)-RuvC(2) complex forms which resolves the HJ.

It localises to the cytoplasm. The RuvA-RuvB-RuvC complex processes Holliday junction (HJ) DNA during genetic recombination and DNA repair, while the RuvA-RuvB complex plays an important role in the rescue of blocked DNA replication forks via replication fork reversal (RFR). RuvA specifically binds to HJ cruciform DNA, conferring on it an open structure. The RuvB hexamer acts as an ATP-dependent pump, pulling dsDNA into and through the RuvAB complex. HJ branch migration allows RuvC to scan DNA until it finds its consensus sequence, where it cleaves and resolves the cruciform DNA. The chain is Holliday junction branch migration complex subunit RuvA from Corynebacterium jeikeium (strain K411).